The following is a 329-amino-acid chain: MMWGAGRSMAWFSAGSGSVNVSIDPAEEPTGPATLLPSPRAWDVVLCISGTLVSCENALVVAIIVGTPAFRAPMFLLVGSLAVADLLAGLGLVLHFAADFCIGSPEMSLVLVGVLATAFTASIGSLLAITVDRYLSLYNALTYYSETTVTRTYVMLALVWVGALGLGLVPVLAWNCRDGLTTCGVVYPLSKNHLVVLAIVFFMVFGIMLQLYAQICRIVCRHAQQIALQRHLLPASHYVATRKGIATLAVVLGAFAACWLPFTVYCLLGDANSPPLYTYLTLLPATYNSMINPVIYAFRNQDVQKVLWAICCCCSTSKIPFRSRSPSDV.

Residues 1–43 (MMWGAGRSMAWFSAGSGSVNVSIDPAEEPTGPATLLPSPRAWD) lie on the Extracellular side of the membrane. N-linked (GlcNAc...) asparagine glycosylation is present at asparagine 20. The chain crosses the membrane as a helical span at residues 44-64 (VVLCISGTLVSCENALVVAII). Topologically, residues 65–73 (VGTPAFRAP) are cytoplasmic. Residues 74-94 (MFLLVGSLAVADLLAGLGLVL) traverse the membrane as a helical segment. Over 95–108 (HFAADFCIGSPEMS) the chain is Extracellular. The chain crosses the membrane as a helical span at residues 109–129 (LVLVGVLATAFTASIGSLLAI). The Cytoplasmic segment spans residues 130–153 (TVDRYLSLYNALTYYSETTVTRTY). Residues 154-174 (VMLALVWVGALGLGLVPVLAW) traverse the membrane as a helical segment. The Extracellular segment spans residues 175 to 192 (NCRDGLTTCGVVYPLSKN). Residues 193 to 213 (HLVVLAIVFFMVFGIMLQLYA) traverse the membrane as a helical segment. Topologically, residues 214 to 247 (QICRIVCRHAQQIALQRHLLPASHYVATRKGIAT) are cytoplasmic. A helical transmembrane segment spans residues 248–268 (LAVVLGAFAACWLPFTVYCLL). The Extracellular segment spans residues 269-277 (GDANSPPLY). Residues 278–298 (TYLTLLPATYNSMINPVIYAF) form a helical membrane-spanning segment. Topologically, residues 299 to 329 (RNQDVQKVLWAICCCCSTSKIPFRSRSPSDV) are cytoplasmic. Cysteine 312 carries S-palmitoyl cysteine lipidation. A phosphoserine mark is found at serine 323, serine 325, and serine 327.

Belongs to the G-protein coupled receptor 1 family. Abundantly expressed in granule neurons at all development stages. Enriched in the longest tips of neurites during differentiation of hippocampal neurons.

It is found in the cell membrane. In terms of biological role, constitutively active G-protein coupled receptor that maintains high 3'-5'-cyclic adenosine monophosphate (cAMP) levels that a plays a role in serveral processes including meiotic arrest in oocytes or neuronal development via activation of numerous intracellular signaling pathways. Acts as an essential activator of thermogenic adipocytes and drives thermogenesis via its intrinsic G(s)-coupling activity without the requirement of a ligand. Has a potential role in modulating a number of brain functions, including behavioral responses to stress, amyloid-beta peptide generation in neurons. Stimulates neurite outgrowth in cerebellar granular neurons modulated via PKA, ERK, and most strongly PI3K-mediated signaling pathways. The protein is G-protein coupled receptor 3 (Gpr3) of Rattus norvegicus (Rat).